A 101-amino-acid polypeptide reads, in one-letter code: Small ribosomal subunit protein uS14 (101 aa).

The protein belongs to the universal ribosomal protein uS14 family. As to quaternary structure, part of the 30S ribosomal subunit. Contacts proteins S3 and S10.

Functionally, binds 16S rRNA, required for the assembly of 30S particles and may also be responsible for determining the conformation of the 16S rRNA at the A site. The sequence is that of Small ribosomal subunit protein uS14 from Cupriavidus metallidurans (strain ATCC 43123 / DSM 2839 / NBRC 102507 / CH34) (Ralstonia metallidurans).